The following is an 813-amino-acid chain: MDASALERDAVQFARLAVQRDHEGRYSEAVFYYKEAAQALIYAEMAGSSLERIQEKINEYLERVQALHSAVQSKSTDPLKSKHQLDLERAHFLVTQAFDEDEKGNVEDAIELYTEAVELCLKTSSETADKTLQNKLKQLARQALDRAEALSEPLTKPFCKLKSANMKTKTPPVRTHFPLGPNPFVEKPQAFISPQSCDAQGQKYTAEEIEVLRTTSKINGVEYVPFMSVDLRERFAYPMPFCDRLGKLPLSPKQKTTFSKWVRPEDLTNNPTMIYTVSSFSIKQTIVSDCSFVASLAISAAYERRFNKKLITSIIYPQNKDGEPEYNPCGKYMVKLHLNGVPRKVIIDDQLPVDHKGELLCSYSNNKSELWVSLIEKAYMKVMGGYDFPGSNSNIDLHALTGWIPERIAMHSDSQTFSKDNSFRMLYQRFHKGDVLITASTGVMTEAEGEKWGLVPTHAYAVLDIREFKGLRFIQLKNPWSHLRWKGRYSENDVKNWTPELQKYLNFDPRTAQKIDNGIFWISWDDLCQYYDVVYLSWNPALFKESTCIHSTWDAKQGPVKDAYSLANNPQYKLEVQCPQGGAAVWVLLSRHITDKDDFANNREFITMVVYKTDGKKVYYPADPPPYIDGIRINSPHYLTKIKLTTPGTHTFTLVVSQYEKQNTIHYTVRVYSACSFTFSKIPSPYTLSKRINGKWSGQSAGGCGNFQETHKNNPIYQFHIDKTGPLLIELRGPRQYSVGFEVVAVSIMGDPGPHGFQRKSSGDYRCGFCYLELENIPAGIFNIIPSTFLPKQEGPFFLDFNSTVPIKTTQLQ.

Residue Met-1 is modified to N-acetylmethionine. Position 95 is a phosphothreonine (Thr-95). The 309-residue stretch at 232 to 540 folds into the Calpain catalytic domain; the sequence is RERFAYPMPF…YDVVYLSWNP (309 aa). Active-site residues include Cys-290, His-458, and Asn-478. The segment at 541 to 701 is domain III; that stretch reads ALFKESTCIH…INGKWSGQSA (161 aa). The interval 702-813 is domain N; the sequence is GGCGNFQETH…TVPIKTTQLQ (112 aa).

The protein belongs to the peptidase C2 family. Ubiquitous.

The protein localises to the nucleus. In terms of biological role, calcium-regulated non-lysosomal thiol-protease. The sequence is that of Calpain-7 (Capn7) from Mus musculus (Mouse).